The chain runs to 334 residues: Proline-serine-threonine phosphatase-interacting protein 2 (334 aa).

The 261-residue stretch at 4–264 folds into the F-BAR domain; the sequence is SLFKGNFWST…SLETCSIEKD (261 aa). Residues 66–163 are a coiled coil; it reads GQSEINTLKR…AEQAVHRSAN (98 aa). The interval 288-322 is disordered; the sequence is YSPQRNAAPPGKTTGPNPARRGPLPVPKRIPDDPD. Tyr323 and Tyr329 each carry phosphotyrosine.

Post-translationally, phosphorylated on tyrosine. In terms of tissue distribution, expressed in macrophage-containing tissues, including bone marrow, spleen, liver, kidney, intestine and brain.

The protein localises to the cytoplasm. The protein resides in the membrane. Its function is as follows. Binds to F-actin. May be involved in regulation of the actin cytoskeleton. This chain is Proline-serine-threonine phosphatase-interacting protein 2 (Pstpip2), found in Mus musculus (Mouse).